The chain runs to 210 residues: Putative odorant-binding protein A5 (210 aa).

A signal peptide spans 1 to 19 (MKLPALHLLFLGFICLARS).

Belongs to the phosphatidylethanolamine-binding protein family. In terms of tissue distribution, cells at the bases of a few scattered sensilla on the posterior surface of the antenna.

Its subcellular location is the secreted. This is Putative odorant-binding protein A5 (a5) from Drosophila melanogaster (Fruit fly).